The chain runs to 490 residues: Katanin p60 ATPase-containing subunit A-like 1 (490 aa).

An N-acetylmethionine modification is found at Met1. Residues 87–182 form a disordered region; the sequence is SCQDEPVRDP…ASDGEIPKFD (96 aa). Basic and acidic residues predominate over residues 116 to 127; the sequence is SNREVRPLRKDM. The segment covering 128 to 139 has biased composition (low complexity); the sequence is AGVGARGPVGRA. Residues 143–169 are compositionally biased toward basic and acidic residues; that stretch reads SKSEKPSTSRDKDNRARGKDDKGRKNM. The residue at position 174 (Ser174) is a Phosphoserine. 248–255 is a binding site for ATP; the sequence is GPPGTGKT.

The protein belongs to the AAA ATPase family. Katanin p60 subunit A1 subfamily. A-like 1 sub-subfamily. Interacts with KATNB1 and KATNBL1.

It localises to the cytoplasm. It is found in the cytoskeleton. The protein localises to the spindle pole. The protein resides in the spindle. It catalyses the reaction n ATP + n H2O + a microtubule = n ADP + n phosphate + (n+1) alpha/beta tubulin heterodimers.. In terms of biological role, regulates microtubule dynamics in Sertoli cells, a process that is essential for spermiogenesis and male fertility. Severs microtubules in an ATP-dependent manner, promoting rapid reorganization of cellular microtubule arrays. Has microtubule-severing activity in vitro. This is Katanin p60 ATPase-containing subunit A-like 1 from Otolemur garnettii (Small-eared galago).